A 237-amino-acid polypeptide reads, in one-letter code: UPF0280 protein Mpal_1292 (237 aa).

The protein belongs to the UPF0280 family.

The chain is UPF0280 protein Mpal_1292 from Methanosphaerula palustris (strain ATCC BAA-1556 / DSM 19958 / E1-9c).